Consider the following 99-residue polypeptide: Integration host factor subunit alpha (99 aa).

It belongs to the bacterial histone-like protein family. Heterodimer of an alpha and a beta chain.

Its function is as follows. This protein is one of the two subunits of integration host factor, a specific DNA-binding protein that functions in genetic recombination as well as in transcriptional and translational control. The protein is Integration host factor subunit alpha of Nitrosococcus oceani (strain ATCC 19707 / BCRC 17464 / JCM 30415 / NCIMB 11848 / C-107).